A 178-amino-acid chain; its full sequence is Large ribosomal subunit protein uL6 (178 aa).

The protein belongs to the universal ribosomal protein uL6 family. Part of the 50S ribosomal subunit.

Functionally, this protein binds to the 23S rRNA, and is important in its secondary structure. It is located near the subunit interface in the base of the L7/L12 stalk, and near the tRNA binding site of the peptidyltransferase center. In Thermoplasma volcanium (strain ATCC 51530 / DSM 4299 / JCM 9571 / NBRC 15438 / GSS1), this protein is Large ribosomal subunit protein uL6.